The sequence spans 815 residues: MGNSPSTQDPSHSTKKEHGHHFHDAFNKDRQGSITSQLFNNRKSTHKRRASHTSEHNGAIPPRMQLLASHDPSTDCDGRMSSDTTIDKGPSHLFKKDYSLSSAADVNDTTLANLTLSDDHDVGAPEEQVKSPSFLSPGPSMATVKQTKSDLDDLSTLNYTMVDETTENERNDKPHHERHRSSIIALKKNLLESSATASPSPTRSSSVHSASLPALTKTDSIDIPVRQPYSKKPSIHAYQYQYLNNDETFSENSQMDKEGNSDSVDAEAGVLQSEDMVLNQSLLQNALKKDMQRLSRVNSSNSMYTTERISHANNNGNIENNTRNKGNAGGSNDDFTAPISATAKMMMKLYGDKTLMERDLNKHQNKTKKAQNKKIRSASNSRRSSFASLHSLQSRKSILTNGLNLQPLHPLHPIINDNESQYSAPQHREISHHSNSMSSMSSISSTNSTENTLVVLKWKDDGTVAATTEVFIVSTDIASALKEQRELTLDENASLDSEKQLNPRIRMVYDDVHKEWFVPDLFLPAGIYRLQFSINGILTHSNFLPTATDSEGNFVNWFEVLPGYHTIEPFRNEADMDSQVEPTLDEELPKRPELKRFPSSSRKSSYYSAKGVERPSTPFSDYRGLSRSSSINMRDSFVRLKASSLDLMAEVKPERLVYSNEIPNLFNIGDGSTISVKGDSDDVHPQEPPSFTHRVVDCNQDDLFATLQQGGNIDAETAEAVFLSRYPVPDLPIYLNSSYLNRILNQSNQNSESHERDEGAINHIIPHVNLNHLLTSSIRDEIISVACTTRYEGKFITQVVYAPCYYKTQKSQISN.

Residues 1 to 11 (MGNSPSTQDPS) show a composition bias toward polar residues. 2 disordered regions span residues 1 to 88 (MGNS…TIDK) and 117 to 148 (SDDH…KQTK). G2 is lipidated: N-myristoyl glycine. The segment covering 12-31 (HSTKKEHGHHFHDAFNKDRQ) has biased composition (basic and acidic residues). Residues 32 to 42 (GSITSQLFNNR) are compositionally biased toward polar residues. Position 33 is a phosphoserine (S33). Composition is skewed to basic and acidic residues over residues 72 to 88 (PSTD…TIDK) and 117 to 129 (SDDH…EEQV). 6 positions are modified to phosphoserine: S181, S198, S200, S206, S209, and S220. Disordered stretches follow at residues 310 to 335 (SHAN…NDDF), 363 to 389 (HQNK…FASL), and 410 to 444 (PLHP…SSIS). Positions 313 to 326 (NNNGNIENNTRNKG) are enriched in low complexity. S331 carries the post-translational modification Phosphoserine. Basic residues predominate over residues 363 to 376 (HQNKTKKAQNKKIR). 2 stretches are compositionally biased toward low complexity: residues 377–389 (SASN…FASL) and 433–444 (HSNSMSSMSSIS). The tract at residues 473–716 (VSTDIASALK…LQQGGNIDAE (244 aa)) is kinase-interacting sequence (KIS); required for interaction with SNF1. S494 and S497 each carry phosphoserine. A disordered region spans residues 583-616 (TLDEELPKRPELKRFPSSSRKSSYYSAKGVERPS). Residues 587–596 (ELPKRPELKR) show a composition bias toward basic and acidic residues. Low complexity predominate over residues 599–608 (SSSRKSSYYS). S643 bears the Phosphoserine mark. The segment at 724-804 (SRYPVPDLPI…FITQVVYAPC (81 aa)) is association with SNF1 kinase complex (ASC) domain; required for interaction with SNF4.

Belongs to the 5'-AMP-activated protein kinase beta subunit family. As to quaternary structure, component of the SNF1 kinase complex, a heterotrimeric complex composed of the catalytic alpha subunit SNF1, one of the three related beta subunits SIP1, SIP2 or GAL83, and the regulatory gamma subunit SNF4. The beta subunit serves as a bridge between the catalytic and the regulatory subunit. Interacts (via KIS domain) with SNF1. Interacts (via ASC domain) with SNF4. In terms of processing, phosphorylated by SNF1 in vitro.

The protein localises to the cytoplasm. The protein resides in the vacuole membrane. In terms of biological role, beta subunit of the SNF1 kinase complex, which is required for transcriptional, metabolic, and developmental adaptations in response to glucose limitation. Has a structural role, mediating heterotrimer formation, and a regulatory role, defining carbon source-regulated subcellular location and substrate specificity of the SNF1 kinase complex. Promotes the PKA-regulated relocalization of the SNF1 kinase complex to the vacuolar membrane in response to various types of carbon stress. This is SNF1 protein kinase subunit beta-1 (SIP1) from Saccharomyces cerevisiae (strain YJM789) (Baker's yeast).